Consider the following 142-residue polypeptide: Hemoglobin subunit alpha-1/2 (142 aa).

The Globin domain occupies 2–142; the sequence is VLSADDKTNI…VSTVLTSKYR (141 aa). A Phosphoserine modification is found at serine 4. An N6-succinyllysine modification is found at lysine 8. A Phosphothreonine modification is found at threonine 9. An N6-succinyllysine modification is found at lysine 12. The residue at position 17 (lysine 17) is an N6-acetyllysine; alternate. The residue at position 17 (lysine 17) is an N6-succinyllysine; alternate. Tyrosine 25 carries the post-translational modification Phosphotyrosine. Lysine 41 carries the post-translational modification N6-succinyllysine. Phosphoserine is present on serine 50. Histidine 59 provides a ligand contact to O2. Histidine 88 is a heme b binding site. At serine 103 the chain carries Phosphoserine. Threonine 109 is modified (phosphothreonine). Phosphoserine occurs at positions 125 and 132. Phosphothreonine is present on residues threonine 135 and threonine 138. Residue serine 139 is modified to Phosphoserine.

The protein belongs to the globin family. Heterotetramer of two alpha chains and two beta chains. As to expression, red blood cells.

In terms of biological role, involved in oxygen transport from the lung to the various peripheral tissues. Functionally, hemopressin acts as an antagonist peptide of the cannabinoid receptor CNR1. Hemopressin-binding efficiently blocks cannabinoid receptor CNR1 and subsequent signaling. This chain is Hemoglobin subunit alpha-1/2 (Hba1), found in Rattus norvegicus (Rat).